Here is a 395-residue protein sequence, read N- to C-terminus: Na(+)/H(+) antiporter NhaA (395 aa).

Transmembrane regions (helical) follow at residues 18–38 (AGGI…NSPL), 64–84 (LLMW…GLEV), 100–120 (IFPA…YWLV), 129–149 (GGWA…LVLL), 160–180 (FLLA…ALFF), 182–202 (HDLS…LILL), 205–225 (FKVS…VSVL), 226–246 (KSGV…PLKG), 266–286 (FLIL…GLGM), 295–315 (LGVT…FSYL), 333–353 (IFAV…LASL), and 368–388 (LGIL…LFVT).

It belongs to the NhaA Na(+)/H(+) (TC 2.A.33) antiporter family.

The protein localises to the cell inner membrane. The enzyme catalyses Na(+)(in) + 2 H(+)(out) = Na(+)(out) + 2 H(+)(in). In terms of biological role, na(+)/H(+) antiporter that extrudes sodium in exchange for external protons. In Histophilus somni (strain 129Pt) (Haemophilus somnus), this protein is Na(+)/H(+) antiporter NhaA.